Reading from the N-terminus, the 653-residue chain is Calpain-10 (653 aa).

One can recognise a Calpain catalytic domain in the interval leucine 13–isoleucine 321. Catalysis depends on residues cysteine 73, histidine 238, and asparagine 263. Domain III stretches follow at residues threonine 322–serine 494 and glutamate 513–glutamine 653.

This sequence belongs to the peptidase C2 family.

In terms of biological role, calcium-regulated non-lysosomal thiol-protease which catalyzes limited proteolysis of substrates involved in cytoskeletal remodeling and signal transduction. May play a role in insulin-stimulated glucose uptake. The sequence is that of Calpain-10 (CAPN10) from Macaca fascicularis (Crab-eating macaque).